A 230-amino-acid chain; its full sequence is Large ribosomal subunit protein uL1 (230 aa).

The protein belongs to the universal ribosomal protein uL1 family. In terms of assembly, part of the 50S ribosomal subunit.

Its function is as follows. Binds directly to 23S rRNA. The L1 stalk is quite mobile in the ribosome, and is involved in E site tRNA release. Functionally, protein L1 is also a translational repressor protein, it controls the translation of the L11 operon by binding to its mRNA. In Bacillus anthracis (strain A0248), this protein is Large ribosomal subunit protein uL1.